A 614-amino-acid chain; its full sequence is Vitamin B12 transporter BtuB (614 aa).

The first 20 residues, 1–20, serve as a signal peptide directing secretion; sequence MIKKASLLTACSVTAFSAWA. The TonB box motif lies at 26 to 33; the sequence is DTLVVTAN. Residues 38–152 enclose the TBDR plug domain; that stretch reads PRSTVLAPTT…IGGVVNIITT (115 aa). Cyanocob(III)alamin is bound by residues L83, S85, N92, and 110–111; that span reads VS. A TBDR beta-barrel domain is found at 155-614; it reads HPGTEISAGW…EYTLXGSYTF (460 aa). A run of 3 beta stranded transmembrane segments spans residues 158–165, 169–178, and 184–195; these read TEISAGWG, YQNYDVSTQQ, and TRVTLLGDYAHT. Ca(2+) is bound by residues D199, Q211, D213, and D215. 2 beta stranded membrane-spanning segments follow: residues 217–227 and 232–248; these read FLSKTLYGALE and DAWSGFVRGYGYDNRTN. Y249 and D250 together coordinate Ca(2+). A251 contributes to the cyanocob(III)alamin binding site. D261 is a binding site for Ca(2+). 14 beta stranded membrane-spanning segments follow: residues 263–277, 279–296, 309–325, 328–337, 353–369, 371–381, 385–400, 403–417, 434–443, 449–458, 473–490, 494–509, 517–529, and 535–550; these read RKLYSQSWDAGLRYN, ELIKSQLITSYSHSKDYN, TLDEMKQYTVQWANNII, HGNIGAGVDW, YDQRNTGIYLTGLQQVG, FTFEGAGRSDD, FGRHGTWQTSAGWEFI, YRFIASYGTSYKAPN, KSKQWEGAFE, VNWRISGYRN, YYNEGKARIKGVEATANF, PLTHTVSYDYVDARNA, RRAKQQVKYQLDW, and DWGITYQYLGTRYDKD. T309 lines the cyanocob(III)alamin pocket. R517 is a cyanocob(III)alamin binding site. Position 551 (Y551) interacts with cyanocob(III)alamin. 3 beta stranded membrane passes run 558–572, 585–596, and 602–614; these read TVKMGGVSLWDLAVA, IANLFDKDYETV, and AGREYTLXGSYTF. The TonB C-terminal box motif lies at 597–614; that stretch reads YGYQTAGREYTLXGSYTF.

The protein belongs to the TonB-dependent receptor family. BtuB (TC 1.B.14.3.1) subfamily.

Its subcellular location is the cell outer membrane. Functionally, involved in the active translocation of vitamin B12 (cyanocobalamin) across the outer membrane to the periplasmic space. It derives its energy for transport by interacting with the trans-periplasmic membrane protein TonB. The polypeptide is Vitamin B12 transporter BtuB (Escherichia coli O6:H1 (strain CFT073 / ATCC 700928 / UPEC)).